Consider the following 494-residue polypeptide: Aspartyl/glutamyl-tRNA(Asn/Gln) amidotransferase subunit B (494 aa).

The protein belongs to the GatB/GatE family. GatB subfamily. Heterotrimer of A, B and C subunits.

The catalysed reaction is L-glutamyl-tRNA(Gln) + L-glutamine + ATP + H2O = L-glutaminyl-tRNA(Gln) + L-glutamate + ADP + phosphate + H(+). The enzyme catalyses L-aspartyl-tRNA(Asn) + L-glutamine + ATP + H2O = L-asparaginyl-tRNA(Asn) + L-glutamate + ADP + phosphate + 2 H(+). Functionally, allows the formation of correctly charged Asn-tRNA(Asn) or Gln-tRNA(Gln) through the transamidation of misacylated Asp-tRNA(Asn) or Glu-tRNA(Gln) in organisms which lack either or both of asparaginyl-tRNA or glutaminyl-tRNA synthetases. The reaction takes place in the presence of glutamine and ATP through an activated phospho-Asp-tRNA(Asn) or phospho-Glu-tRNA(Gln). The chain is Aspartyl/glutamyl-tRNA(Asn/Gln) amidotransferase subunit B from Nitrobacter hamburgensis (strain DSM 10229 / NCIMB 13809 / X14).